The chain runs to 148 residues: Ribonuclease H (148 aa).

Residues 3–144 (DKEQVVIYTD…ADQLANRGVA (142 aa)) form the RNase H type-1 domain. Residues D12, E50, D72, and D136 each coordinate Mg(2+). Positions 125-148 (GHTGDPGNERADQLANRGVAELPR) are disordered.

The protein belongs to the RNase H family. As to quaternary structure, monomer. Mg(2+) is required as a cofactor.

The protein localises to the cytoplasm. It catalyses the reaction Endonucleolytic cleavage to 5'-phosphomonoester.. Its function is as follows. Endonuclease that specifically degrades the RNA of RNA-DNA hybrids. The chain is Ribonuclease H from Pseudomonas paraeruginosa (strain DSM 24068 / PA7) (Pseudomonas aeruginosa (strain PA7)).